We begin with the raw amino-acid sequence, 181 residues long: MRILGIDPGLRTTGFGVLERHGHKLVYVASGTIKSNGNADLPSRLKTLYDGVSELVSTYRPDCASIEKVFVNVNPQSTLLLGQARGAVICGLMSGNLPVFEYTALQLKQAVVGYGRANKDQVQEMVVRLLNLEGKPGADASDALGVAICHAHGGETLAAMAGLAPQLAQKGLRVRRGRLVG.

Catalysis depends on residues Asp7, Glu67, and Asp139. Mg(2+) is bound by residues Asp7, Glu67, and Asp139.

It belongs to the RuvC family. Homodimer which binds Holliday junction (HJ) DNA. The HJ becomes 2-fold symmetrical on binding to RuvC with unstacked arms; it has a different conformation from HJ DNA in complex with RuvA. In the full resolvosome a probable DNA-RuvA(4)-RuvB(12)-RuvC(2) complex forms which resolves the HJ. The cofactor is Mg(2+).

Its subcellular location is the cytoplasm. It carries out the reaction Endonucleolytic cleavage at a junction such as a reciprocal single-stranded crossover between two homologous DNA duplexes (Holliday junction).. Functionally, the RuvA-RuvB-RuvC complex processes Holliday junction (HJ) DNA during genetic recombination and DNA repair. Endonuclease that resolves HJ intermediates. Cleaves cruciform DNA by making single-stranded nicks across the HJ at symmetrical positions within the homologous arms, yielding a 5'-phosphate and a 3'-hydroxyl group; requires a central core of homology in the junction. The consensus cleavage sequence is 5'-(A/T)TT(C/G)-3'. Cleavage occurs on the 3'-side of the TT dinucleotide at the point of strand exchange. HJ branch migration catalyzed by RuvA-RuvB allows RuvC to scan DNA until it finds its consensus sequence, where it cleaves and resolves the cruciform DNA. The protein is Crossover junction endodeoxyribonuclease RuvC of Ralstonia pickettii (strain 12J).